The sequence spans 376 residues: Chaperone protein DnaJ (376 aa).

The J domain maps to 5 to 72 (DFYEVLGVPK…QKRAAYDQYG (68 aa)). The segment at 136-214 (GKEAQIRIPS…CHGQGRVKKQ (79 aa)) adopts a CR-type zinc-finger fold. Positions 149, 152, 166, 169, 188, 191, 202, and 205 each coordinate Zn(2+). 4 CXXCXGXG motif repeats span residues 149–156 (CETCHGSG), 166–173 (CGTCQGSG), 188–195 (CPHCRGTG), and 202–209 (CTACHGQG). 2 disordered regions span residues 227-246 (DGMR…GGPP) and 352-376 (SLKK…SFFS). Over residues 237-246 (GEPGTNGGPP) the composition is skewed to gly residues. Positions 367 to 376 (WTDRLKSFFS) are enriched in basic and acidic residues.

It belongs to the DnaJ family. In terms of assembly, homodimer. Requires Zn(2+) as cofactor.

Its subcellular location is the cytoplasm. Its function is as follows. Participates actively in the response to hyperosmotic and heat shock by preventing the aggregation of stress-denatured proteins and by disaggregating proteins, also in an autonomous, DnaK-independent fashion. Unfolded proteins bind initially to DnaJ; upon interaction with the DnaJ-bound protein, DnaK hydrolyzes its bound ATP, resulting in the formation of a stable complex. GrpE releases ADP from DnaK; ATP binding to DnaK triggers the release of the substrate protein, thus completing the reaction cycle. Several rounds of ATP-dependent interactions between DnaJ, DnaK and GrpE are required for fully efficient folding. Also involved, together with DnaK and GrpE, in the DNA replication of plasmids through activation of initiation proteins. In Acidovorax sp. (strain JS42), this protein is Chaperone protein DnaJ.